The sequence spans 395 residues: Putative nickel insertion protein (395 aa).

Belongs to the LarC family.

This Archaeoglobus fulgidus (strain ATCC 49558 / DSM 4304 / JCM 9628 / NBRC 100126 / VC-16) protein is Putative nickel insertion protein.